An 89-amino-acid chain; its full sequence is Large ribosomal subunit protein bL28 (89 aa).

It belongs to the bacterial ribosomal protein bL28 family.

This chain is Large ribosomal subunit protein bL28, found in Chlamydia abortus (strain DSM 27085 / S26/3) (Chlamydophila abortus).